A 159-amino-acid polypeptide reads, in one-letter code: Troponin C, skeletal muscle (159 aa).

Thr-1 is modified (N-acetylthreonine). EF-hand domains follow at residues 14–49 (EMIA…LGQT), 50–85 (PTKE…QMKE), 90–125 (KSEE…SGEH), and 126–159 (VTDE…EGVQ). Ca(2+)-binding residues include Asp-27, Asp-29, Asp-33, Glu-38, Asp-63, Asp-65, Ser-67, Thr-69, Glu-74, Asp-103, Asn-105, Asp-107, Tyr-109, Glu-114, Asp-139, Asn-141, Asp-143, Arg-145, and Glu-150.

The protein belongs to the troponin C family.

In terms of biological role, troponin is the central regulatory protein of striated muscle contraction. Tn consists of three components: Tn-I which is the inhibitor of actomyosin ATPase, Tn-T which contains the binding site for tropomyosin and Tn-C. The binding of calcium to Tn-C abolishes the inhibitory action of Tn on actin filaments. The chain is Troponin C, skeletal muscle (TNNC2) from Sus scrofa (Pig).